A 509-amino-acid polypeptide reads, in one-letter code: Cytochrome P450 4X1 (509 aa).

Residues 14–34 form a helical membrane-spanning segment; it reads FYLAFVFCLALGLLQAIKLYL. Residue Cys454 participates in heme binding.

The protein belongs to the cytochrome P450 family. Heme is required as a cofactor. In terms of tissue distribution, expressed in brain, heart, kidney and skin and, at lower levels, in skeletal muscle and liver. In the brain, high levels are detected in amygdala and lower levels in globus pallidus and cerebellum. In the heart, very high levels in aorta, but very low levels in other heart regions. Also expressed in breast, prostate and colon.

The protein localises to the endoplasmic reticulum membrane. It localises to the microsome membrane. It carries out the reaction N-(5Z,8Z,11Z,14Z-eicosatetraenoyl)-ethanolamine + reduced [NADPH--hemoprotein reductase] + O2 = N-(14,15-epoxy-5Z,8Z,11Z-eicosatrienoyl)-ethanolamine + oxidized [NADPH--hemoprotein reductase] + H2O + H(+). Its function is as follows. A cytochrome P450 monooxygenase that selectively catalyzes the epoxidation of the last double bond of the arachidonoyl moiety of anandamide, potentially modulating endocannabinoid signaling. Has no hydroxylase activity toward various fatty acids, steroids and prostaglandins. Mechanistically, uses molecular oxygen inserting one oxygen atom into a substrate, and reducing the second into a water molecule, with two electrons provided by NADPH via cytochrome P450 reductase (CPR; NADPH-ferrihemoprotein reductase). The chain is Cytochrome P450 4X1 from Homo sapiens (Human).